Reading from the N-terminus, the 375-residue chain is Actin, cytoplasmic (375 aa).

This sequence belongs to the actin family.

The protein resides in the cytoplasm. It localises to the cytoskeleton. The enzyme catalyses ATP + H2O = ADP + phosphate + H(+). Actins are highly conserved proteins that are involved in various types of cell motility and are ubiquitously expressed in all eukaryotic cells. In Sterkiella nova (Ciliate), this protein is Actin, cytoplasmic (MIC-ACT-1).